Reading from the N-terminus, the 113-residue chain is Colipase (113 aa).

The first 18 residues, 1–18 (MEKVLVLLLVSLLAVAYA), serve as a signal peptide directing secretion. Residues 19–23 (APGPR) constitute a propeptide, enterostatin, activation peptide. Disulfide bonds link Cys-35-Cys-46, Cys-41-Cys-57, Cys-45-Cys-79, Cys-67-Cys-87, and Cys-81-Cys-105.

The protein belongs to the colipase family. Forms a 1:1 stoichiometric complex with pancreatic lipase. As to expression, expressed by the pancreas.

The protein resides in the secreted. In terms of biological role, colipase is a cofactor of pancreatic lipase. It allows the lipase to anchor itself to the lipid-water interface. Without colipase the enzyme is washed off by bile salts, which have an inhibitory effect on the lipase. Functionally, enterostatin has a biological activity as a satiety signal. This Mus musculus (Mouse) protein is Colipase.